A 223-amino-acid chain; its full sequence is ATP-dependent Clp protease proteolytic subunit 2 (223 aa).

The active-site Nucleophile is the Ser118. The active site involves His143.

It belongs to the peptidase S14 family. As to quaternary structure, fourteen ClpP subunits assemble into 2 heptameric rings which stack back to back to give a disk-like structure with a central cavity, resembling the structure of eukaryotic proteasomes.

The protein resides in the cytoplasm. The catalysed reaction is Hydrolysis of proteins to small peptides in the presence of ATP and magnesium. alpha-casein is the usual test substrate. In the absence of ATP, only oligopeptides shorter than five residues are hydrolyzed (such as succinyl-Leu-Tyr-|-NHMec, and Leu-Tyr-Leu-|-Tyr-Trp, in which cleavage of the -Tyr-|-Leu- and -Tyr-|-Trp bonds also occurs).. Functionally, cleaves peptides in various proteins in a process that requires ATP hydrolysis. Has a chymotrypsin-like activity. Plays a major role in the degradation of misfolded proteins. This Leifsonia xyli subsp. xyli (strain CTCB07) protein is ATP-dependent Clp protease proteolytic subunit 2.